Reading from the N-terminus, the 124-residue chain is Fluoride-specific ion channel FluC 2 (124 aa).

4 helical membrane-spanning segments follow: residues 1–21 (MSDI…RFQI), 34–54 (FLIL…LSLV), 66–86 (LILF…SFVY), and 103–123 (LFII…FLGT). 2 residues coordinate Na(+): glycine 76 and serine 79.

It belongs to the fluoride channel Fluc/FEX (TC 1.A.43) family.

It localises to the cell inner membrane. The enzyme catalyses fluoride(in) = fluoride(out). Na(+) is not transported, but it plays an essential structural role and its presence is essential for fluoride channel function. Functionally, fluoride-specific ion channel. Important for reducing fluoride concentration in the cell, thus reducing its toxicity. This chain is Fluoride-specific ion channel FluC 2, found in Prochlorococcus marinus (strain NATL2A).